A 361-amino-acid chain; its full sequence is sn-glycerol-3-phosphate import ATP-binding protein UgpC (361 aa).

One can recognise an ABC transporter domain in the interval 4 to 235 (LSLKGVRKSY…PATVFVAGFI (232 aa)). 37–44 (GPSGCGKS) provides a ligand contact to ATP.

Belongs to the ABC transporter superfamily. sn-glycerol-3-phosphate importer (TC 3.A.1.1.3) family. In terms of assembly, the complex is composed of two ATP-binding proteins (UgpC), two transmembrane proteins (UgpA and UgpE) and a solute-binding protein (UgpB).

It is found in the cell inner membrane. It carries out the reaction sn-glycerol 3-phosphate(out) + ATP + H2O = sn-glycerol 3-phosphate(in) + ADP + phosphate + H(+). In terms of biological role, part of the ABC transporter complex UgpBAEC involved in sn-glycerol-3-phosphate (G3P) import. Responsible for energy coupling to the transport system. This is sn-glycerol-3-phosphate import ATP-binding protein UgpC from Burkholderia cenocepacia (strain HI2424).